Consider the following 211-residue polypeptide: Large ribosomal subunit protein uL3 (211 aa).

N5-methylglutamine is present on glutamine 150.

Belongs to the universal ribosomal protein uL3 family. In terms of assembly, part of the 50S ribosomal subunit. Forms a cluster with proteins L14 and L19. Post-translationally, methylated by PrmB.

Its function is as follows. One of the primary rRNA binding proteins, it binds directly near the 3'-end of the 23S rRNA, where it nucleates assembly of the 50S subunit. The polypeptide is Large ribosomal subunit protein uL3 (Pseudomonas fluorescens (strain ATCC BAA-477 / NRRL B-23932 / Pf-5)).